We begin with the raw amino-acid sequence, 1810 residues long: Trinucleotide repeat-containing gene 6B protein (1810 aa).

Residues 1 to 22 (MQTNEGEVEEESSSQVEQEDFV) show a composition bias toward acidic residues. Disordered stretches follow at residues 1–221 (MQTN…PNPI), 235–1080 (EEWP…KKQM), 1141–1196 (MRKD…SSPG), and 1293–1329 (ALQQ…NMVP). Residues 33 to 75 (GEESKQEKEQEREEQLMEDKKRKKEDKKKKEATQKVTEQKTKV) are a coiled coil. Composition is skewed to basic and acidic residues over residues 34–52 (EESK…MEDK) and 60–77 (KKKE…KVPE). Positions 37–1028 (KQEKEQEREE…AMKPNSKSMQ (992 aa)) are interaction with argonaute proteins. Low complexity predominate over residues 88–106 (AASPIGSSPSPPVNGGNNA). The segment covering 123 to 139 (MPREVPPRFRCQQDHKV) has biased composition (basic and acidic residues). Residues 165–174 (APGANPNNNA) show a composition bias toward low complexity. The span at 180 to 190 (LLQSESGTAPE) shows a compositional bias: polar residues. 2 stretches are compositionally biased toward low complexity: residues 207 to 220 (GPGA…SPNP) and 248 to 260 (SSEN…SASN). Polar residues-rich tracts occupy residues 261-290 (PGSE…SGNE) and 306-327 (QPPN…TSGQ). Composition is skewed to low complexity over residues 335–346 (GFSNFNPNSNPS), 363–380 (ETES…GQAS), and 416–425 (NSLNLSSPNP). The span at 438-451 (GNTSRSTDAPSQST) shows a compositional bias: polar residues. Residues 475 to 486 (SGQSNSGNNGNN) are compositionally biased toward low complexity. Polar residues-rich tracts occupy residues 504 to 528 (GSKS…PQDN), 564 to 575 (GPNQPNSSTGAW), 611 to 623 (TGSN…SDSH), and 655 to 667 (LSNT…QIKQ). Residues 675 to 688 (EVPRPEGKSDKGTE) are compositionally biased toward basic and acidic residues. 2 stretches are compositionally biased toward polar residues: residues 774-783 (QPNQGWTSGK) and 793-804 (VKNNNWESSANK). The segment covering 809 to 824 (WGEGGQNEIGTWGNGG) has biased composition (gly residues). A compositionally biased stretch (polar residues) spans 846 to 857 (TGRQPNSWNKQH). Residue Ser913 is modified to Phosphoserine. 5 stretches are compositionally biased toward polar residues: residues 934-950 (NSYN…NSQG), 964-975 (TGKSASVWSKST), 1004-1027 (ASTT…SKSM), 1057-1072 (TAGS…SASW), and 1175-1195 (GNST…SSSP). The interval 1191 to 1700 (LSSSPGLRAQ…LAEFATEDEV (510 aa)) is silencing domain; interaction with CNOT1 and PAN3. The segment covering 1295–1307 (QQQQQQQQQQQRQ) has biased composition (low complexity). Ser1409 carries the post-translational modification Phosphoserine. Thr1426 is subject to Phosphothreonine. Ser1438 is subject to Phosphoserine. Residue Thr1441 is modified to Phosphothreonine. The interval 1449 to 1467 (SNASWPPEFQPGVPWKGIQ) is PABPC1-interacting motif-2 (PAM2). The interval 1568 to 1619 (SSRNTTPLTRPPPGLTNPKPASPWSSTAPRSVRGWGTQDSRIASASTWSDGG) is disordered. A compositionally biased stretch (polar residues) spans 1604 to 1617 (TQDSRIASASTWSD). The 73-residue stretch at 1625–1697 (YWLVLHNLTP…TTILAEFATE (73 aa)) folds into the RRM domain. Disordered regions lie at residues 1706–1740 (QAQP…GPAL) and 1786–1810 (EDPH…SDSI). Polar residues predominate over residues 1722 to 1733 (GWQSLETSQNQA). The span at 1792-1801 (GSPAPLLPGD) shows a compositional bias: low complexity. 2 positions are modified to phosphoserine: Ser1793 and Ser1809.

It belongs to the GW182 family. As to quaternary structure, interacts with AGO1, AGO2, AGO3 and AGO4. Interacts with CNOT1; the interaction mediates the association with the CCR4-NOT complex. Interacts with PAN3; the interaction mediates the association with the PAN complex. Interacts with MOV10; the interaction is direct and RNA-dependent.

The protein resides in the cytoplasm. It is found in the P-body. Functionally, plays a role in RNA-mediated gene silencing by both micro-RNAs (miRNAs) and short interfering RNAs (siRNAs). Required for miRNA-dependent translational repression and siRNA-dependent endonucleolytic cleavage of complementary mRNAs by argonaute family proteins. As scaffolding protein associates with argonaute proteins bound to partially complementary mRNAs and simultaneously can recruit CCR4-NOT and PAN deadenylase complexes. The sequence is that of Trinucleotide repeat-containing gene 6B protein (Tnrc6b) from Mus musculus (Mouse).